A 269-amino-acid polypeptide reads, in one-letter code: Putative hydro-lyase Swoo_1731 (269 aa).

The protein belongs to the D-glutamate cyclase family.

This is Putative hydro-lyase Swoo_1731 from Shewanella woodyi (strain ATCC 51908 / MS32).